The chain runs to 356 residues: 3-dehydroquinate synthase (356 aa).

Residues 71 to 76 (EGEASK), 105 to 109 (GVTGD), 129 to 130 (TS), Lys142, and Lys151 contribute to the NAD(+) site. Positions 184, 247, and 264 each coordinate Zn(2+).

This sequence belongs to the sugar phosphate cyclases superfamily. Dehydroquinate synthase family. The cofactor is Co(2+). Requires Zn(2+) as cofactor. It depends on NAD(+) as a cofactor.

It localises to the cytoplasm. It carries out the reaction 7-phospho-2-dehydro-3-deoxy-D-arabino-heptonate = 3-dehydroquinate + phosphate. It functions in the pathway metabolic intermediate biosynthesis; chorismate biosynthesis; chorismate from D-erythrose 4-phosphate and phosphoenolpyruvate: step 2/7. In terms of biological role, catalyzes the conversion of 3-deoxy-D-arabino-heptulosonate 7-phosphate (DAHP) to dehydroquinate (DHQ). The protein is 3-dehydroquinate synthase of Lactococcus lactis subsp. cremoris (strain MG1363).